The following is an 87-amino-acid chain: Small ribosomal subunit protein uS15 (87 aa).

This sequence belongs to the universal ribosomal protein uS15 family. In terms of assembly, part of the 30S ribosomal subunit. Forms a bridge to the 50S subunit in the 70S ribosome, contacting the 23S rRNA.

Its function is as follows. One of the primary rRNA binding proteins, it binds directly to 16S rRNA where it helps nucleate assembly of the platform of the 30S subunit by binding and bridging several RNA helices of the 16S rRNA. Forms an intersubunit bridge (bridge B4) with the 23S rRNA of the 50S subunit in the ribosome. This chain is Small ribosomal subunit protein uS15, found in Cutibacterium acnes (strain DSM 16379 / KPA171202) (Propionibacterium acnes).